The following is a 257-amino-acid chain: Glutamate racemase (257 aa).

Substrate contacts are provided by residues 12–13 (DS) and 44–45 (YG). Cys-75 serves as the catalytic Proton donor/acceptor. 76-77 (NT) contributes to the substrate binding site. Cys-185 (proton donor/acceptor) is an active-site residue. Position 186-187 (186-187 (TH)) interacts with substrate.

This sequence belongs to the aspartate/glutamate racemases family.

It catalyses the reaction L-glutamate = D-glutamate. Its pathway is cell wall biogenesis; peptidoglycan biosynthesis. Its function is as follows. Provides the (R)-glutamate required for cell wall biosynthesis. The sequence is that of Glutamate racemase from Clostridium botulinum (strain Loch Maree / Type A3).